A 203-amino-acid polypeptide reads, in one-letter code: Glycerol-3-phosphate acyltransferase (203 aa).

The next 6 membrane-spanning stretches (helical) occupy residues 3–23 (ILLATVAAYLIGSVSFAVVVS), 51–71 (KAAILTLVGDAFKGWLAVWLV), 74–94 (FGIGGEIGVALAAIAVFLGHL), 116–136 (AVHPVLGLATALTWLIVAFFF), 140–160 (SLAALVAAVFAPIFDVFLFGT), and 164–178 (PVAWAVLAMSVLLIW).

Belongs to the PlsY family. In terms of assembly, probably interacts with PlsX.

The protein localises to the cell inner membrane. It carries out the reaction an acyl phosphate + sn-glycerol 3-phosphate = a 1-acyl-sn-glycero-3-phosphate + phosphate. The protein operates within lipid metabolism; phospholipid metabolism. Its function is as follows. Catalyzes the transfer of an acyl group from acyl-phosphate (acyl-PO(4)) to glycerol-3-phosphate (G3P) to form lysophosphatidic acid (LPA). This enzyme utilizes acyl-phosphate as fatty acyl donor, but not acyl-CoA or acyl-ACP. The sequence is that of Glycerol-3-phosphate acyltransferase from Burkholderia mallei (strain ATCC 23344).